A 179-amino-acid chain; its full sequence is Large ribosomal subunit protein uL5 (179 aa).

This sequence belongs to the universal ribosomal protein uL5 family. Part of the 50S ribosomal subunit; part of the 5S rRNA/L5/L18/L25 subcomplex. Contacts the 5S rRNA and the P site tRNA. Forms a bridge to the 30S subunit in the 70S ribosome.

In terms of biological role, this is one of the proteins that bind and probably mediate the attachment of the 5S RNA into the large ribosomal subunit, where it forms part of the central protuberance. In the 70S ribosome it contacts protein S13 of the 30S subunit (bridge B1b), connecting the 2 subunits; this bridge is implicated in subunit movement. Contacts the P site tRNA; the 5S rRNA and some of its associated proteins might help stabilize positioning of ribosome-bound tRNAs. The sequence is that of Large ribosomal subunit protein uL5 from Haemophilus ducreyi (strain 35000HP / ATCC 700724).